We begin with the raw amino-acid sequence, 818 residues long: Protocadherin beta-1 (818 aa).

A signal peptide spans 1 to 28 (MAGTRRKSLQNRQVGSLLIFLCISVGDA). At 29-691 (TTIRYSVAEE…RKVNPSTKYL (663 aa)) the chain is on the extracellular side. Cadherin domains follow at residues 35–133 (VAEE…APVF), 138–242 (PLLK…VPQF), 243–347 (SRLV…PPEV), 348–452 (MVSS…PPIF), and 457–562 (YILT…RPMI). Asparagine 169, asparagine 209, asparagine 257, and asparagine 419 each carry an N-linked (GlcNAc...) asparagine glycan. A glycan (N-linked (GlcNAc...) asparagine) is linked at asparagine 568. The Cadherin 6 domain occupies 577–672 (VPRSAEAGYL…LVDGFSEPYL (96 aa)). The chain crosses the membrane as a helical span at residues 692–712 (VISLVILSFLFLLSVIVIFII). Residues 713 to 818 (HVYQKIKYRE…GHDQVSDDYM (106 aa)) are Cytoplasmic-facing. The interval 789–818 (MEAGSSLPPNSDRNKSQRLEGHDQVSDDYM) is disordered. A compositionally biased stretch (basic and acidic residues) spans 800–818 (DRNKSQRLEGHDQVSDDYM).

It is found in the cell membrane. In terms of biological role, potential calcium-dependent cell-adhesion protein. May be involved in the establishment and maintenance of specific neuronal connections in the brain. This chain is Protocadherin beta-1 (PCDHB1), found in Homo sapiens (Human).